A 418-amino-acid polypeptide reads, in one-letter code: Putative F-box protein At3g23950 (418 aa).

Residues 1–42 (MNIPPELTFEVLVRLPLKSLARFRSMCKEWKLVIDSEFFRDC) enclose the F-box domain.

The polypeptide is Putative F-box protein At3g23950 (Arabidopsis thaliana (Mouse-ear cress)).